An 851-amino-acid polypeptide reads, in one-letter code: Periplasmic nitrate reductase (851 aa).

The tat-type signal signal peptide spans 1-29 (MQSNRRDFLKAQALAASAAAAGIPIVVEA). The region spanning 44 to 100 (VRWDKAPCRFCGTGCAVMVGVQEGKVVATQGDPEAPVNRGLNCIKGYFLSKIMYGRD) is the 4Fe-4S Mo/W bis-MGD-type domain. Residues cysteine 51, cysteine 54, cysteine 58, and cysteine 86 each coordinate [4Fe-4S] cluster. Mo-bis(molybdopterin guanine dinucleotide) is bound by residues lysine 88, glutamine 155, asparagine 180, cysteine 184, 217-224 (WGSNMAEM), 248-252 (STYEH), and 267-269 (QTD). Residues 317 to 338 (DATSNGYPGADGKPKGNPNDST) form a disordered region. Mo-bis(molybdopterin guanine dinucleotide)-binding positions include methionine 388, glutamine 392, asparagine 498, 524–525 (SD), lysine 547, aspartate 574, and 741–750 (TGRVLEHWHT). Position 817 (phenylalanine 817) interacts with substrate. Mo-bis(molybdopterin guanine dinucleotide) contacts are provided by asparagine 825 and lysine 842.

The protein belongs to the prokaryotic molybdopterin-containing oxidoreductase family. NasA/NapA/NarB subfamily. As to quaternary structure, component of the periplasmic nitrate reductase NapAB complex composed of NapA and NapB. It depends on [4Fe-4S] cluster as a cofactor. Requires Mo-bis(molybdopterin guanine dinucleotide) as cofactor. Post-translationally, predicted to be exported by the Tat system. The position of the signal peptide cleavage has not been experimentally proven.

Its subcellular location is the periplasm. It catalyses the reaction 2 Fe(II)-[cytochrome] + nitrate + 2 H(+) = 2 Fe(III)-[cytochrome] + nitrite + H2O. In terms of biological role, catalytic subunit of the periplasmic nitrate reductase complex NapAB. Receives electrons from NapB and catalyzes the reduction of nitrate to nitrite. The sequence is that of Periplasmic nitrate reductase from Leptothrix cholodnii (strain ATCC 51168 / LMG 8142 / SP-6) (Leptothrix discophora (strain SP-6)).